The sequence spans 87 residues: uncharacterized protein (87 aa).

The protein to bacteriophage lambda exonuclease exo.

This is an uncharacterized protein from Escherichia coli (strain K12).